The chain runs to 952 residues: Plasma membrane ATPase 4 (952 aa).

Residues 1-64 (MAKAISLEEI…EKNESKILKF (64 aa)) are Cytoplasmic-facing. Residues 65–84 (LGFMWNPLSWVMEAAAVMAI) form a helical membrane-spanning segment. The Extracellular segment spans residues 85-96 (ALANGDGKPPDW). The chain crosses the membrane as a helical span at residues 97–117 (QDFIGIICLLVINSTISFIEE). The Cytoplasmic segment spans residues 118-246 (NNAGNAAAAL…GHFQKVLTAI (129 aa)). Residues 247–267 (GNFCICSIAIGMLVEIIVMYP) traverse the membrane as a helical segment. Residues 268–277 (IQHRKYRDGI) lie on the Extracellular side of the membrane. Residues 278 to 299 (DNLLVLLIGGIPIAMPTVLSVT) traverse the membrane as a helical segment. The Cytoplasmic portion of the chain corresponds to 300–646 (MAIGSHRLSQ…TSRAIFQRMK (347 aa)). The active-site 4-aspartylphosphate intermediate is Asp332. 2 residues coordinate Mg(2+): Asp591 and Asp595. Residues 647–668 (NYTIYAVSITIRIVFGFMFIAL) form a helical membrane-spanning segment. Residues 669–673 (IWKYD) lie on the Extracellular side of the membrane. A helical membrane pass occupies residues 674 to 696 (FSAFMVLIIAILNDGTIMTISKD). The Cytoplasmic segment spans residues 697 to 712 (RVKPSPMPDSWKLKEI). Residues 713-733 (FATGVVLGGYQALMTVVFFWA) traverse the membrane as a helical segment. The Extracellular segment spans residues 734–754 (MHDTDFFSDKFGVKSLRNSDE). Residues 755–775 (EMMSALYLQVSIISQALIFVT) traverse the membrane as a helical segment. Topologically, residues 776–787 (RSRSWSFLERPG) are cytoplasmic. A helical membrane pass occupies residues 788–808 (MLLVIAFMIAQLVATLIAVYA). At 809–817 (NWAFARVKG) the chain is on the extracellular side. The helical transmembrane segment at 818 to 838 (CGWGWAGVIWLYSIIFYLPLD) threads the bilayer. The Cytoplasmic segment spans residues 839–952 (IMKFAIRYIL…IETIQQHYTV (114 aa)).

This sequence belongs to the cation transport ATPase (P-type) (TC 3.A.3) family. Type IIIA subfamily. As to expression, expressed at high levels in root, stem, leaf and flower.

It localises to the cell membrane. The catalysed reaction is ATP + H2O + H(+)(in) = ADP + phosphate + 2 H(+)(out). The plasma membrane ATPase of plants and fungi is a hydrogen ion pump. The proton gradient it generates drives the active transport of nutrients by H(+)-symport. The resulting external acidification and/or internal alkinization may mediate growth responses. This Nicotiana plumbaginifolia (Leadwort-leaved tobacco) protein is Plasma membrane ATPase 4 (PMA4).